Here is a 143-residue protein sequence, read N- to C-terminus: Large ribosomal subunit protein uL11 (143 aa).

Belongs to the universal ribosomal protein uL11 family. Part of the ribosomal stalk of the 50S ribosomal subunit. Interacts with L10 and the large rRNA to form the base of the stalk. L10 forms an elongated spine to which L12 dimers bind in a sequential fashion forming a multimeric L10(L12)X complex. Post-translationally, one or more lysine residues are methylated.

In terms of biological role, forms part of the ribosomal stalk which helps the ribosome interact with GTP-bound translation factors. This is Large ribosomal subunit protein uL11 from Erythrobacter litoralis (strain HTCC2594).